Consider the following 76-residue polypeptide: Small ribosomal subunit protein bS18 (76 aa).

This sequence belongs to the bacterial ribosomal protein bS18 family. In terms of assembly, part of the 30S ribosomal subunit. Forms a tight heterodimer with protein bS6.

Functionally, binds as a heterodimer with protein bS6 to the central domain of the 16S rRNA, where it helps stabilize the platform of the 30S subunit. The sequence is that of Small ribosomal subunit protein bS18 from Carboxydothermus hydrogenoformans (strain ATCC BAA-161 / DSM 6008 / Z-2901).